Consider the following 437-residue polypeptide: Elongation factor 1-gamma (437 aa).

Alanine 2 is modified (N-acetylalanine). Positions 2 to 87 (AAGTLYTYPE…YVSNEELRGS (86 aa)) constitute a GST N-terminal domain. The 129-residue stretch at 88–216 (TPEAAAQVVQ…VKLCEKMAQF (129 aa)) folds into the GST C-terminal domain. Lysine 147 and lysine 212 each carry N6-acetyllysine. Residues 221 to 254 (FAETQPKKDTPRKEKGSREEKQKPQAERKEEKKA) are compositionally biased toward basic and acidic residues. The tract at residues 221–268 (FAETQPKKDTPRKEKGSREEKQKPQAERKEEKKAAAPAPEEEMDECEQ) is disordered. A Glycyl lysine isopeptide (Lys-Gly) (interchain with G-Cter in SUMO1) cross-link involves residue lysine 253. Residues 276 to 437 (AKDPFAHLPK…KAFNQGKIFK (162 aa)) enclose the EF-1-gamma C-terminal domain. Lysine 285 participates in a covalent cross-link: Glycyl lysine isopeptide (Lys-Gly) (interchain with G-Cter in SUMO2). Lysine 401 carries the post-translational modification N6-acetyllysine. The residue at position 434 (lysine 434) is an N6-acetyllysine; alternate. At lysine 434 the chain carries N6-malonyllysine; alternate.

In terms of assembly, EF-1 is composed of four subunits: alpha, beta, delta, and gamma. In terms of tissue distribution, highly expressed in pancreatic tumor tissue and to a lesser extent in normal kidney, intestine, pancreas, stomach, lung, brain, spleen and liver.

Its function is as follows. Probably plays a role in anchoring the complex to other cellular components. The protein is Elongation factor 1-gamma (EEF1G) of Homo sapiens (Human).